The primary structure comprises 89 residues: Small ribosomal subunit protein bS20 (89 aa).

It belongs to the bacterial ribosomal protein bS20 family.

Its function is as follows. Binds directly to 16S ribosomal RNA. The sequence is that of Small ribosomal subunit protein bS20 from Helicobacter pylori (strain ATCC 700392 / 26695) (Campylobacter pylori).